Consider the following 138-residue polypeptide: Ostreolysin A6 (138 aa).

The protein belongs to the aegerolysin family. In terms of assembly, monomer.

In terms of biological role, has hemolytic activity against bovine erythrocytes at nanomolar concentrations in vitro. Promotes active pleurotolysin B (PlyB)-dependent permeabilization of membranes rich in cholesterol and sphingomyelin. May play an important role in the initial phase of fungal fruiting. The chain is Ostreolysin A6 (OlyA6) from Pleurotus ostreatus (Oyster mushroom).